Reading from the N-terminus, the 22-residue chain is Plasticin-TR (22 aa).

This sequence belongs to the frog skin active peptide (FSAP) family. Plasticin subfamily. In terms of assembly, exhibits a propensity to self-association and forms helical oligomers in membrane-mimetic environments. Expressed by the skin glands.

It is found in the secreted. The protein localises to the target cell membrane. Functionally, has no antimicrobial activity against Gram-negative bacterium E.coli ATCC 25922, Gram-positive bacterium S.epidermidis ATCC 12228 and against fungus C.albicans ATCC 24433 at concentrations up to 100 uM. Has an anti-inflammatory effect, since it inhibits the production of the pro-inflammatory cytokines TNF-alpha and IL-1 beta. Has high activity of stimulation of insulin release, which may protect the species from being eaten by predators by causing fatal hypoglycemia. Is not cytotoxic to cancer line cells. Does not show hemolysis on mouse erythrocytes. Adopts a mixture of alpha-helical and beta-sheet structures. This is Plasticin-TR from Phyllomedusa trinitatis (Trinidad leaf frog).